Consider the following 179-residue polypeptide: Isopentenyl-diphosphate Delta-isomerase (179 aa).

H25 and H31 together coordinate Mn(2+). The Nudix hydrolase domain maps to E29 to L161. C66 is a catalytic residue. Position 66 (C66) interacts with Mg(2+). Residue H68 participates in Mn(2+) binding. Residue E86 coordinates Mg(2+). Mn(2+) contacts are provided by E111 and E113. Residue E113 is part of the active site.

Belongs to the IPP isomerase type 1 family. In terms of assembly, homodimer. The cofactor is Mg(2+). Mn(2+) serves as cofactor.

The protein resides in the cytoplasm. The enzyme catalyses isopentenyl diphosphate = dimethylallyl diphosphate. It participates in isoprenoid biosynthesis; dimethylallyl diphosphate biosynthesis; dimethylallyl diphosphate from isopentenyl diphosphate: step 1/1. Its function is as follows. Catalyzes the 1,3-allylic rearrangement of the homoallylic substrate isopentenyl (IPP) to its highly electrophilic allylic isomer, dimethylallyl diphosphate (DMAPP). This Pectobacterium atrosepticum (strain SCRI 1043 / ATCC BAA-672) (Erwinia carotovora subsp. atroseptica) protein is Isopentenyl-diphosphate Delta-isomerase.